Here is a 337-residue protein sequence, read N- to C-terminus: Ketol-acid reductoisomerase (NADP(+)) (337 aa).

Residues 3–183 enclose the KARI N-terminal Rossmann domain; that stretch reads IELFYDADAD…GGGRAGIIPT (181 aa). NADP(+)-binding positions include 26–29, Arg49, Ser52, Ser54, and 84–87; these read YGSQ and DTSQ. The active site involves His109. Position 135 (Gly135) interacts with NADP(+). The KARI C-terminal knotted domain maps to 184 to 329; it reads TFEAETVTDL…AKLRDLMSWV (146 aa). Mg(2+)-binding residues include Asp192, Glu196, Glu228, and Glu232. Substrate is bound at residue Ser253.

It belongs to the ketol-acid reductoisomerase family. It depends on Mg(2+) as a cofactor.

The enzyme catalyses (2R)-2,3-dihydroxy-3-methylbutanoate + NADP(+) = (2S)-2-acetolactate + NADPH + H(+). It catalyses the reaction (2R,3R)-2,3-dihydroxy-3-methylpentanoate + NADP(+) = (S)-2-ethyl-2-hydroxy-3-oxobutanoate + NADPH + H(+). It functions in the pathway amino-acid biosynthesis; L-isoleucine biosynthesis; L-isoleucine from 2-oxobutanoate: step 2/4. The protein operates within amino-acid biosynthesis; L-valine biosynthesis; L-valine from pyruvate: step 2/4. In terms of biological role, involved in the biosynthesis of branched-chain amino acids (BCAA). Catalyzes an alkyl-migration followed by a ketol-acid reduction of (S)-2-acetolactate (S2AL) to yield (R)-2,3-dihydroxy-isovalerate. In the isomerase reaction, S2AL is rearranged via a Mg-dependent methyl migration to produce 3-hydroxy-3-methyl-2-ketobutyrate (HMKB). In the reductase reaction, this 2-ketoacid undergoes a metal-dependent reduction by NADPH to yield (R)-2,3-dihydroxy-isovalerate. This chain is Ketol-acid reductoisomerase (NADP(+)), found in Corynebacterium efficiens (strain DSM 44549 / YS-314 / AJ 12310 / JCM 11189 / NBRC 100395).